Here is a 501-residue protein sequence, read N- to C-terminus: Large ribosomal subunit protein uL2m (501 aa).

Disordered stretches follow at residues 187-217 (GRER…APRR) and 459-501 (AMNP…KRRN). The span at 198 to 213 (NTFSQSEGQRWKTQSG) shows a compositional bias: polar residues. Positions 464 to 474 (DHPHGGGEGRT) are enriched in basic and acidic residues.

This sequence belongs to the universal ribosomal protein uL2 family.

It is found in the mitochondrion. The polypeptide is Large ribosomal subunit protein uL2m (RPL2) (Marchantia polymorpha (Common liverwort)).